A 564-amino-acid chain; its full sequence is MKNTCGILLNLFLFIGCFLTCSASNTPKVQVHSGEIAGGFEYTYNGRKIYSFLGIPYASPPVQNNRFKEPQPVQPWLGVWNATVPGSACLGIEFGSGSKIIGQEDCLFLNVYTPKLPQENSAGDLMNVIVHIHGGGYYFGEGILYGPHYLLDNNDFVYVSINYRLGVLGFASTGDGVLPGNNGLKDQVAALKWIQQNIVAFGGDPNSVTITGMSAGASSVHNHLISPMSKGLFNRAIIQSGSAFCHWSTAENVAQKTKYIANLLGCPTNNSVEIVECLRSRPAKAIAKSYLNFMPWRNFPFTPFGPTVEVAGYEKFLPDIPEKLVPHDIPVLISIAQDEGLIFSTFLGLENGFNELNNNWNEHLPHILDYNYTISNENLRFKTAQDIKEFYFGDKPISKETKSNLSKMISDRSFGYGTSKAAQHIAAKNTAPVYFYEFGYSGNYSYVAFFDPKSYSRGSSPTHGDETNYVLKVDGFTVYDNEEDRKMIKTMVNIWATFIKSGVPDTENSEIWLPVSKNPADLFRFTKITQQQTFEAREQSTMAIMNFGVAYHYQNILNLMCQMT.

An N-terminal signal peptide occupies residues 1–23; it reads MKNTCGILLNLFLFIGCFLTCSA. Asn81 is a glycosylation site (N-linked (GlcNAc...) asparagine). Residues Cys89 and Cys106 are joined by a disulfide bond. The Acyl-ester intermediate role is filled by Ser214. An intrachain disulfide couples Cys266 to Cys277. Asn269 carries an N-linked (GlcNAc...) asparagine glycan. The Charge relay system role is filled by Glu339. Residues Asn371, Asn404, and Asn443 are each glycosylated (N-linked (GlcNAc...) asparagine). The active-site Charge relay system is His463.

Belongs to the type-B carboxylesterase/lipase family.

It carries out the reaction a carboxylic ester + H2O = an alcohol + a carboxylate + H(+). In terms of biological role, overproduction of nonspecific esterases is a common mechanism of resistance to organophosphate insecticides. The chain is Esterase FE4 from Myzus persicae (Green peach aphid).